A 174-amino-acid polypeptide reads, in one-letter code: MKDLTMLLDELKDMSFFNKGDICLIGCSTSEVIGEKIGTVGSMEVAETIFNALDVVSKETGVTFAFQGCEHINRAITIEKSQYNPLTMEEVSVVPDVHAGGSLATYAFQHMKDPIVVEHITVPCGIDIGQTLIGMHIKHVCVPVRTSVKQVGQAIVTIATSRPKKIGGERAKYQ.

This sequence belongs to the UPF0340 family.

The sequence is that of UPF0340 protein MW2038 from Staphylococcus aureus (strain MW2).